The sequence spans 1479 residues: C-type mannose receptor 2 (1479 aa).

An N-terminal signal peptide occupies residues 1–30 (MVPIRPALAPWPRHLLRCVLLLGGLRLGHP). Over 31–1413 (ADSAAALLEP…SAALPESPVA (1383 aa)) the chain is Extracellular. Positions 37–190 (LLEPDVFLIF…SHGKPCTIPF (154 aa)) constitute a Ricin B-type lectin domain. Cysteines 92 and 111 form a disulfide. N-linked (GlcNAc...) asparagine glycosylation is found at N101 and N139. The region spanning 181-229 (SHGKPCTIPFKYDNQWFHGCTSTGREDGHLWCATTQDYGKDERWGFCPI) is the Fibronectin type-II domain. 4 disulfides stabilise this stretch: C186–C212, C200–C227, C265–C358, and C334–C350. A C-type lectin 1 domain is found at 243 to 359 (LTDSCYQFNF…CSIALPYVCK (117 aa)). A glycan (N-linked (GlcNAc...) asparagine) is linked at N363. C-type lectin domains follow at residues 388–504 (FQGH…SICK), 527–643 (HSPS…RYIC), 677–808 (KLRH…WICK), 831–950 (FQEA…YICK), 978–1106 (FLNK…GFIC), 1131–1242 (YLNH…GAVC), and 1271–1391 (FREH…GVVC). Intrachain disulfides connect C409–C503, C480–C495, C617–C634, C703–C807, C784–C799, C852–C949, and C926–C941. N1028 is a glycosylation site (N-linked (GlcNAc...) asparagine). C1077 and C1097 form a disulfide bridge. K1141 is covalently cross-linked (Glycyl lysine isopeptide (Lys-Gly) (interchain with G-Cter in SUMO1)). A disulfide bridge connects residues C1219 and C1233. N1348 carries N-linked (GlcNAc...) asparagine glycosylation. Residues C1367 and C1382 are joined by a disulfide bond. A helical membrane pass occupies residues 1414-1434 (LVVVLTAVLLLLALMTAALIL). Residues 1435–1479 (YRRRQSAERGSFEGARYSRSSHSGPAEATEKNILVSDMEMNEQQE) are Cytoplasmic-facing. A disordered region spans residues 1446–1479 (FEGARYSRSSHSGPAEATEKNILVSDMEMNEQQE).

As to quaternary structure, interacts directly with PLAUR/UPAR and PLAU/pro-UPA to form a tri-molecular complex. Interacts with collagen V and with C-terminal region of type I collagen/COL1A1. Post-translationally, phosphorylated. Highly expressed in heart, lung and kidney, but little or no expression in brain, thymus or adult liver. Expressed at highly endothelialized sites such as those in choroid plexus and kidney glomerulai as well as in chondrocytes in cartilaginous regions of the embryo.

The protein localises to the membrane. Its function is as follows. May play a role as endocytotic lectin receptor displaying calcium-dependent lectin activity. Internalizes glycosylated ligands from the extracellular space for release in an endosomal compartment via clathrin-mediated endocytosis. May be involved in plasminogen activation system controlling the extracellular level of PLAUR/PLAU, and thus may regulate protease activity at the cell surface. May contribute to cellular uptake, remodeling and degradation of extracellular collagen matrices. May participate in remodeling of extracellular matrix cooperating with the matrix metalloproteinases (MMPs). In Mus musculus (Mouse), this protein is C-type mannose receptor 2 (Mrc2).